The following is a 172-amino-acid chain: Putative phosphoesterase BCG9842_B4061 (172 aa).

The active-site Proton donor is the His-34. 2 consecutive short sequence motifs (HXTX) follow at residues 34 to 37 (HITL) and 115 to 118 (HLTI). His-115 (proton acceptor) is an active-site residue.

The protein belongs to the 2H phosphoesterase superfamily. YjcG family.

This chain is Putative phosphoesterase BCG9842_B4061, found in Bacillus cereus (strain G9842).